A 239-amino-acid polypeptide reads, in one-letter code: Metallo-beta-lactamase IND-1 (239 aa).

Positions 1-20 (MKKSIRFFIVSILLSPFASA) are cleaved as a signal peptide. Zn(2+)-binding residues include His-96, His-98, Asp-100, His-159, and Cys-178. A beta-lactam is bound at residue Lys-181. Position 220 (His-220) interacts with Zn(2+).

It belongs to the metallo-beta-lactamase superfamily. Class-B beta-lactamase family. In terms of assembly, monomer. It depends on Zn(2+) as a cofactor.

Its subcellular location is the periplasm. It carries out the reaction a beta-lactam + H2O = a substituted beta-amino acid. Its activity is regulated as follows. Inhibited by chelating agents such as EDTA. Not susceptible to inactivation by the beta-lactamase-blocking agent clavulanic acid. Class B beta-lactamase which confers resistance to the beta-lactam antibiotics, including penicillins, cephalosporins and carbapenems. Acts via hydrolysis of the beta-lactam ring. Has penicillin-, cephalosporin- and carbapenem-hydrolyzing activities. This Chryseobacterium indologenes (Flavobacterium indologenes) protein is Metallo-beta-lactamase IND-1.